The following is a 99-amino-acid chain: MQFTLEFGGGLELLCDSVKIHKVNINLLNDSDILTMKDLLSWVRTNLIKERPEMFMKGDTVRPGVLVLVNDCDWELSGQLDTTLEDKDVIVFISTLHGG.

Position 99 is a 1-thioglycine (G99). G99 participates in a covalent cross-link: Glycyl lysine isopeptide (Gly-Lys) (interchain with K-? in acceptor proteins).

It belongs to the URM1 family. In terms of processing, C-terminal thiocarboxylation occurs in 2 steps, it is first acyl-adenylated (-COAMP) via the hesA/moeB/thiF part of the MOCS3 homolog, then thiocarboxylated (-COSH) via the rhodanese domain of the MOCS3 homolog.

The protein localises to the cytoplasm. Its pathway is tRNA modification; 5-methoxycarbonylmethyl-2-thiouridine-tRNA biosynthesis. Its function is as follows. Acts as a sulfur carrier required for 2-thiolation of mcm(5)S(2)U at tRNA wobble positions of cytosolic tRNA(Lys), tRNA(Glu) and tRNA(Gln). Serves as sulfur donor in tRNA 2-thiolation reaction by being thiocarboxylated (-COSH) at its C-terminus by MOCS3. The sulfur is then transferred to tRNA to form 2-thiolation of mcm(5)S(2)U. Also acts as a ubiquitin-like protein (UBL) that is covalently conjugated via an isopeptide bond to lysine residues of target proteins. The thiocarboxylated form serves as substrate for conjugation and oxidative stress specifically induces the formation of UBL-protein conjugates. The chain is Ubiquitin-related modifier 1 homolog 2 from Arabidopsis thaliana (Mouse-ear cress).